Here is a 461-residue protein sequence, read N- to C-terminus: E3 ubiquitin-protein ligase parkin (461 aa).

Positions 30 to 90 (VNIYVKSNVG…DSTVIEVLDF (61 aa)) constitute a Ubiquitin-like domain. Residue serine 92 is modified to Phosphoserine. An RING-type 0; atypical zinc finger spans residues 145–227 (AHFFIYCANP…SQGENDTAVP (83 aa)). 4 residues coordinate Zn(2+): cysteine 151, cysteine 155, cysteine 167, and cysteine 170. Threonine 176 is modified (phosphothreonine). Positions 197, 202, 213, 216, 240, 243, 255, 259, 262, 265, 291, 295, 334, 339, 354, 356, 361, 364, 369, 373, 415, and 418 each coordinate Zn(2+). Residues 236–461 (KKIPCLACTD…RDCMASHWFG (226 aa)) are TRIAD supradomain. Residues 240–295 (CLACTDICDPVLVFSCDNRHVTCLECFKNYCGSRLKDRQFLSHPDFGYTLPCPAGC) form an RING-type 1 zinc finger. 2 IBR-type zinc fingers span residues 315–373 (EQYH…LGEC) and 411–452 (LTKP…PWER). An RING-type 2; atypical zinc finger spans residues 415-446 (CPKCRTSTERAGGCMHMICTRANCGFHWCWVC). The active site involves cysteine 428. Positions 433, 438, 443, 446, 454, and 458 each coordinate Zn(2+).

The protein belongs to the RBR family. Parkin subfamily. Forms an E3 ubiquitin ligase complex with E2 ubiquitin-conjugating enzymes. Post-translationally, auto-ubiquitinates in an E2-dependent manner leading to its own degradation. In terms of processing, phosphorylated. Activation requires phosphorylation at Ser-92 by Pink1 and binding to Pink1-phosphorylated polyubiquitin chains. Phosphorylation at Thr-176 by Pink1 is also important for mitochondrial localization.

It localises to the mitochondrion. Its subcellular location is the cytoplasm. It is found in the cytosol. It carries out the reaction [E2 ubiquitin-conjugating enzyme]-S-ubiquitinyl-L-cysteine + [acceptor protein]-L-lysine = [E2 ubiquitin-conjugating enzyme]-L-cysteine + [acceptor protein]-N(6)-ubiquitinyl-L-lysine.. The protein operates within protein modification; protein ubiquitination. In the autoinhibited state the side chain of Phe-460 inserts into a hydrophobic groove in RING-0, occluding the ubiquitin acceptor site Cys-428, whereas the REP repressor element binds RING-1 and blocks its E2-binding site. Activation of park requires 2 steps: (1) phosphorylation at Ser-92 by Pink1 and (2) binding to phosphorylated ubiquitin, leading to unlock repression of the catalytic Cys-428 by the RING-0 region via an allosteric mechanism and converting park to its fully-active form. According to another report, phosphorylation at Ser-92 by Pink1 is not essential for activation and only binding to phosphorylated ubiquitin is essential to unlock repression. Functionally, E3 ubiquitin-protein ligase which accepts ubiquitin from E2 ubiquitin-conjugating enzymes in the form of a thioester and then directly transfers the ubiquitin to targeted substrates, such as Marf, Opa1, Sep1, Tom20 and porin. Mediates monoubiquitination as well as 'Lys-6', 'Lys-11', 'Lys-48'-linked and 'Lys-63'-linked polyubiquitination of substrates, depending on the context. Protects against mitochondrial dysfunction during cellular stress, by acting downstream of Pink1, to coordinate mitochondrial quality control mechanisms that remove and replace dysfunctional mitochondrial components. Depending on the severity of mitochondrial damage and/or dysfunction, activity ranges from preventing apoptosis and stimulating mitochondrial biogenesis to regulating mitochondrial dynamics and eliminating severely damaged mitochondria via mitophagy. Appears to be particularly important in maintaining the physiology and function of cells with high energy demands that are undergoing stress or altered metabolic environment, including spermatids, muscle cells and neurons such as the dopaminergic (DA) neurons. Activation and recruitment onto the outer membrane of damaged/dysfunctional mitochondria (OMM) requires Pink1-mediated phosphorylation of both park and ubiquitin. In depolarized mitochondria, mediates the decision between mitophagy or preventing apoptosis by inducing either the poly- or monoubiquitination of porin/VDAC; polyubiquitination of porin promotes mitophagy, while monoubiquitination of porin decreases mitochondrial calcium influx which ultimately inhibits apoptosis. When cellular stress results in irreversible mitochondrial damage, promotes the autophagic degradation of dysfunctional depolarized mitochondria (mitophagy) by promoting the ubiquitination of mitochondrial proteins. Preferentially assembles 'Lys-6'-, 'Lys-11'- and 'Lys-63'-linked polyubiquitin chains following mitochondrial damage, leading to mitophagy. In developing tissues, inhibits JNK-mediated apoptosis by negatively regulating bsk transcription. The Pink1-park pathway also promotes fission and/or inhibits fusion of damaged mitochondria by mediating the ubiquitination and subsequent degradation of proteins involved in mitochondrial fusion/fission such as Marf and Opa1. This prevents the refusion of unhealthy mitochondria with the healthy mitochondrial network and/or initiates mitochondrial fragmentation facilitating their later engulfment by autophagosomes. Regulates motility of damaged mitochondria by phosphorylating Miro which likely promotes its park-dependent degradation by the proteasome; in motor neurons, this inhibits mitochondrial intracellular anterograde transport along the axons which probably increases the chance of the mitochondria being eliminated in the soma. The Pink1-park pathway is also involved in mitochondrial regeneration processes such as promoting mitochondrial biogenesis, activating localized mitochondrial repair, promoting selective turnover of mitochondrial proteins and initiating the mitochondrial import of endogenous proteins. Involved in mitochondrial biogenesis via the ubiquitination of transcriptional repressor Paris which leads to its subsequent proteasomal degradation and allows activation of the transcription factor srl. Promotes localized mitochondrial repair by activating the translation of specific nuclear-encoded mitochondrial RNAs (nc-mtRNAs) on the mitochondrial surface, including several key electron transport chain component nc-mtRNAs. In Pediculus humanus subsp. corporis (Body louse), this protein is E3 ubiquitin-protein ligase parkin.